An 880-amino-acid chain; its full sequence is Interference hedgehog (880 aa).

An N-terminal signal peptide occupies residues Met1 to Ala20. At Ile21–Thr703 the chain is on the extracellular side. Ig-like C2-type domains are found at residues Pro45–Leu142, Pro132–Thr234, Pro252–Val340, and Pro346–Asn432. 4 disulfide bridges follow: Cys68/Cys126, Cys173/Cys220, Cys276/Cys324, and Cys367/Cys414. Asn102 and Asn209 each carry an N-linked (GlcNAc...) asparagine glycan. Positions Gly426–Val467 are disordered. Fibronectin type-III domains follow at residues Pro461–Gly567 and Val575–Pro670. Asn466 is a glycosylation site (N-linked (GlcNAc...) asparagine). Heparin contacts are provided by Arg497, Lys501, Lys503, and Arg541. N-linked (GlcNAc...) asparagine glycosylation is present at Asn557. The tract at residues Leu662 to Asn697 is disordered. Polar residues-rich tracts occupy residues Gly665–Pro678 and Thr688–Asn697. An N-linked (GlcNAc...) asparagine glycan is attached at Asn693. A helical transmembrane segment spans residues Gly704–Cys724. Topologically, residues Arg725–Val880 are cytoplasmic. Disordered regions lie at residues Ser728–Arg762 and Gln775–Val880. 2 stretches are compositionally biased toward low complexity: residues Arg823–Asn837 and Ser864–Val880.

This sequence belongs to the immunoglobulin superfamily. IHOG family. Homodimer. Heterotetramer; 2 iHog chains bind 2 hh chains when facilitated by heparin, heparin is required to promote high-affinity interactions between hh and iHog.

The protein localises to the membrane. In terms of biological role, mediates response to the active Hedgehog (Hh) protein signal in embryos, functioning upstream or at the level of patched (ptc). The chain is Interference hedgehog from Drosophila yakuba (Fruit fly).